The following is a 645-amino-acid chain: DNA ligase (645 aa).

NAD(+) is bound by residues 30–34 and 72–73; these read DAEFD and SQ. The active-site N6-AMP-lysine intermediate is lysine 99. Arginine 120, glutamate 163, lysine 275, and lysine 296 together coordinate NAD(+). Positions 387, 390, 403, and 408 each coordinate Zn(2+). The region spanning 564–645 is the BRCT domain; it reads EEGAVLKGLS…EAFLNLIGKV (82 aa).

This sequence belongs to the NAD-dependent DNA ligase family. LigA subfamily. Mg(2+) is required as a cofactor. The cofactor is Mn(2+).

The enzyme catalyses NAD(+) + (deoxyribonucleotide)n-3'-hydroxyl + 5'-phospho-(deoxyribonucleotide)m = (deoxyribonucleotide)n+m + AMP + beta-nicotinamide D-nucleotide.. Its function is as follows. DNA ligase that catalyzes the formation of phosphodiester linkages between 5'-phosphoryl and 3'-hydroxyl groups in double-stranded DNA using NAD as a coenzyme and as the energy source for the reaction. It is essential for DNA replication and repair of damaged DNA. This is DNA ligase from Treponema denticola (strain ATCC 35405 / DSM 14222 / CIP 103919 / JCM 8153 / KCTC 15104).